Here is a 205-residue protein sequence, read N- to C-terminus: Small ribosomal subunit protein uS4 (205 aa).

Residues 1–44 (MSKRHSQKYKIDRRMGENLWGRPKSPVNSRSYGPGQHGQRRKTK) form a disordered region. One can recognise an S4 RNA-binding domain in the interval 94–173 (SRLDAIVYRC…LPEYIDLDAK (80 aa)).

It belongs to the universal ribosomal protein uS4 family. In terms of assembly, part of the 30S ribosomal subunit. Contacts protein S5. The interaction surface between S4 and S5 is involved in control of translational fidelity.

In terms of biological role, one of the primary rRNA binding proteins, it binds directly to 16S rRNA where it nucleates assembly of the body of the 30S subunit. Functionally, with S5 and S12 plays an important role in translational accuracy. This is Small ribosomal subunit protein uS4 from Maricaulis maris (strain MCS10) (Caulobacter maris).